The chain runs to 151 residues: Peptide methionine sulfoxide reductase MsrB (151 aa).

Residues 5 to 127 enclose the MsrB domain; it reads KEERLKQLTR…NSAALRFVPK (123 aa). Residue C116 is the Nucleophile of the active site.

Belongs to the MsrB Met sulfoxide reductase family.

The catalysed reaction is L-methionyl-[protein] + [thioredoxin]-disulfide + H2O = L-methionyl-(R)-S-oxide-[protein] + [thioredoxin]-dithiol. This is Peptide methionine sulfoxide reductase MsrB from Bacillus licheniformis (strain ATCC 14580 / DSM 13 / JCM 2505 / CCUG 7422 / NBRC 12200 / NCIMB 9375 / NCTC 10341 / NRRL NRS-1264 / Gibson 46).